We begin with the raw amino-acid sequence, 629 residues long: 1-deoxy-D-xylulose-5-phosphate synthase (629 aa).

Thiamine diphosphate is bound by residues H85 and G126–S128. D157 is a Mg(2+) binding site. Thiamine diphosphate-binding positions include G158–S159, N186, Y293, and E373. Residue N186 participates in Mg(2+) binding.

The protein belongs to the transketolase family. DXPS subfamily. In terms of assembly, homodimer. Mg(2+) is required as a cofactor. Requires thiamine diphosphate as cofactor.

It carries out the reaction D-glyceraldehyde 3-phosphate + pyruvate + H(+) = 1-deoxy-D-xylulose 5-phosphate + CO2. It functions in the pathway metabolic intermediate biosynthesis; 1-deoxy-D-xylulose 5-phosphate biosynthesis; 1-deoxy-D-xylulose 5-phosphate from D-glyceraldehyde 3-phosphate and pyruvate: step 1/1. In terms of biological role, catalyzes the acyloin condensation reaction between C atoms 2 and 3 of pyruvate and glyceraldehyde 3-phosphate to yield 1-deoxy-D-xylulose-5-phosphate (DXP). The polypeptide is 1-deoxy-D-xylulose-5-phosphate synthase (Helicobacter hepaticus (strain ATCC 51449 / 3B1)).